The chain runs to 374 residues: uncharacterized protein (374 aa).

The segment at 1 to 46 (MVNEEEKDLTAEGDSNNTGVSPDSIKNKTLDFYPKEKTTERKTRSR) is disordered. Positions 25–46 (IKNKTLDFYPKEKTTERKTRSR) are enriched in basic and acidic residues. 6 consecutive transmembrane segments (helical) span residues 70–90 (YAYIIFAAFLGMASYDYFIAA), 127–147 (WVFYFVFNIPLFIFGVIKIGI), 153–173 (TIVYIGLQNGFHFAFAYIPVI), 199–219 (IWLFVFAAVAGILNGIAYGLV), 242–262 (ISIANYNRIVNYIIIVVMLAI), and 312–332 (YFFGPALFASYLFVVVQAITI).

The protein to M.genitalium MG432 and MG443.

It localises to the cell membrane. This is an uncharacterized protein from Spiroplasma citri.